Consider the following 364-residue polypeptide: tRNA 2-selenouridine synthase (364 aa).

One can recognise a Rhodanese domain in the interval 14-137; the sequence is LIADTPIIDV…LRQAAIQATI (124 aa). Cys-97 functions as the S-selanylcysteine intermediate in the catalytic mechanism.

This sequence belongs to the SelU family. Monomer.

The catalysed reaction is 5-methylaminomethyl-2-thiouridine(34) in tRNA + selenophosphate + (2E)-geranyl diphosphate + H2O + H(+) = 5-methylaminomethyl-2-selenouridine(34) in tRNA + (2E)-thiogeraniol + phosphate + diphosphate. It catalyses the reaction 5-methylaminomethyl-2-thiouridine(34) in tRNA + (2E)-geranyl diphosphate = 5-methylaminomethyl-S-(2E)-geranyl-thiouridine(34) in tRNA + diphosphate. The enzyme catalyses 5-methylaminomethyl-S-(2E)-geranyl-thiouridine(34) in tRNA + selenophosphate + H(+) = 5-methylaminomethyl-2-(Se-phospho)selenouridine(34) in tRNA + (2E)-thiogeraniol. It carries out the reaction 5-methylaminomethyl-2-(Se-phospho)selenouridine(34) in tRNA + H2O = 5-methylaminomethyl-2-selenouridine(34) in tRNA + phosphate. Functionally, involved in the post-transcriptional modification of the uridine at the wobble position (U34) of tRNA(Lys), tRNA(Glu) and tRNA(Gln). Catalyzes the conversion of 2-thiouridine (S2U-RNA) to 2-selenouridine (Se2U-RNA). Acts in a two-step process involving geranylation of 2-thiouridine (S2U) to S-geranyl-2-thiouridine (geS2U) and subsequent selenation of the latter derivative to 2-selenouridine (Se2U) in the tRNA chain. In Shigella sonnei (strain Ss046), this protein is tRNA 2-selenouridine synthase.